Consider the following 396-residue polypeptide: Ribosomal RNA large subunit methyltransferase I (396 aa).

One can recognise a PUA domain in the interval serine 2–phenylalanine 79.

It belongs to the methyltransferase superfamily. RlmI family.

Its subcellular location is the cytoplasm. It carries out the reaction cytidine(1962) in 23S rRNA + S-adenosyl-L-methionine = 5-methylcytidine(1962) in 23S rRNA + S-adenosyl-L-homocysteine + H(+). In terms of biological role, specifically methylates the cytosine at position 1962 (m5C1962) of 23S rRNA. The protein is Ribosomal RNA large subunit methyltransferase I of Aeromonas salmonicida (strain A449).